Here is a 635-residue protein sequence, read N- to C-terminus: Transaminated amino acid decarboxylase (635 aa).

Lysine 588 participates in a covalent cross-link: Glycyl lysine isopeptide (Lys-Gly) (interchain with G-Cter in ubiquitin).

This sequence belongs to the TPP enzyme family. It depends on Mg(2+) as a cofactor. Thiamine diphosphate serves as cofactor.

It is found in the cytoplasm. The enzyme catalyses 4-methyl-2-oxopentanoate + H(+) = 3-methylbutanal + CO2. The catalysed reaction is (S)-3-methyl-2-oxopentanoate + H(+) = 2-methylbutanal + CO2. It carries out the reaction indole-3-pyruvate + H(+) = indole-3-acetaldehyde + CO2. It catalyses the reaction 3-phenylpyruvate + H(+) = 2-phenylacetaldehyde + CO2. The enzyme catalyses 4-methylsulfanyl-2-oxobutanoate + H(+) = 3-methylsulfanylpropanal + CO2. The catalysed reaction is 3-(4-hydroxyphenyl)pyruvate + H(+) = (4-hydroxyphenyl)acetaldehyde + CO2. It participates in amino-acid degradation; Ehrlich pathway. One of five 2-oxo acid decarboxylases (PDC1, PDC5, PDC6, ARO10, and THI3) involved in amino acid catabolism. The enzyme catalyzes the decarboxylation of amino acids, which, in a first step, have been transaminated to the corresponding 2-oxo acids (alpha-keto-acids). In a third step, the resulting aldehydes are reduced to alcohols, collectively referred to as fusel oils or alcohols. Its preferred substrates are the transaminated amino acids derived from phenylalanine (phenylpyruvate), tryptophan (3-(indol-3-yl)pyruvate), and probably tyrosine (4-hydroxyphenylpyruvate), but also isoleucine ((3S)-3-methyl-2-oxopentanoate, also alpha-keto-beta-methylvalerate) and methionine (4-methylthio-2-oxobutanoate), whereas transaminated leucine (4-methyl-2-oxopentanoate, also alpha-keto-isocaproate) is a low efficiency substrate and transaminated valine and pyruvate are no substrates. In analogy to the pyruvate decarboxylases the enzyme may in a side-reaction catalyze condensation (or carboligation) reactions leading to the formation of 2-hydroxy ketone, collectively called acyloins. This is Transaminated amino acid decarboxylase (ARO10) from Saccharomyces cerevisiae (strain ATCC 204508 / S288c) (Baker's yeast).